We begin with the raw amino-acid sequence, 308 residues long: SAP30-binding protein (308 aa).

The interval 15-101 (AEYSDPESDG…EAEKRDPQEL (87 aa)) is disordered. 4 positions are modified to phosphoserine: S18, S22, S43, and S52. Positions 57–78 (DEDGYEEEEDENSKQSEDDDSE) are enriched in acidic residues. The segment covering 79–99 (TEKPEADDPKDNTEAEKRDPQ) has biased composition (basic and acidic residues). K95 is covalently cross-linked (Glycyl lysine isopeptide (Lys-Gly) (interchain with G-Cter in SUMO2)). S113 bears the Phosphoserine mark. Glycyl lysine isopeptide (Lys-Gly) (interchain with G-Cter in SUMO2) cross-links involve residues K220, K304, and K305.

The protein belongs to the HCNGP family. As to quaternary structure, interacts with histone deacetylase complex subunit SAP30.

Its subcellular location is the nucleus. Functionally, plays a role in transcriptional repression by promoting histone deacetylase activity, leading to deacetylation of histone H3. May be involved in the regulation of beta-2-microglobulin genes. The protein is SAP30-binding protein (Sap30bp) of Mus musculus (Mouse).